Reading from the N-terminus, the 182-residue chain is UPF0397 protein SPH_0594 (182 aa).

The next 5 membrane-spanning stretches (helical) occupy residues 10–30 (VVAV…NIPT), 46–66 (LLSI…GHAI), 73–93 (YGLW…VGLF), 109–129 (ILIF…VLAP), and 148–168 (IVAG…LLLA).

The protein belongs to the UPF0397 family.

The protein resides in the cell membrane. The protein is UPF0397 protein SPH_0594 of Streptococcus pneumoniae (strain Hungary19A-6).